The following is a 404-amino-acid chain: 8-amino-7-oxononanoate synthase (404 aa).

Residue arginine 20 coordinates substrate. Pyridoxal 5'-phosphate is bound at residue 116–117 (GY). Histidine 141 is a substrate binding site. Residues serine 187, histidine 215, and threonine 243 each coordinate pyridoxal 5'-phosphate. Lysine 246 is modified (N6-(pyridoxal phosphate)lysine). Threonine 366 contributes to the substrate binding site.

It belongs to the class-II pyridoxal-phosphate-dependent aminotransferase family. BioF subfamily. In terms of assembly, homodimer. It depends on pyridoxal 5'-phosphate as a cofactor.

It carries out the reaction 6-carboxyhexanoyl-[ACP] + L-alanine + H(+) = (8S)-8-amino-7-oxononanoate + holo-[ACP] + CO2. It functions in the pathway cofactor biosynthesis; biotin biosynthesis. In terms of biological role, catalyzes the decarboxylative condensation of pimeloyl-[acyl-carrier protein] and L-alanine to produce 8-amino-7-oxononanoate (AON), [acyl-carrier protein], and carbon dioxide. This Cupriavidus taiwanensis (strain DSM 17343 / BCRC 17206 / CCUG 44338 / CIP 107171 / LMG 19424 / R1) (Ralstonia taiwanensis (strain LMG 19424)) protein is 8-amino-7-oxononanoate synthase.